The chain runs to 164 residues: MKMFVPAVVFAALASASAWANNGDTAQPLEKIAPYPQAEKGMKRQVITLTPQQDESTLKVELLIGQTLNVDCNQHRLGGTLETKTLEGWGYDYYVFDNVTSPVSTMMACPEGKKEQKFVTAWLGEDGMLRYNSKLPIVVYTPANVDVKYRIWKADANVQNAIAR.

The first 20 residues, 1–20, serve as a signal peptide directing secretion; it reads MKMFVPAVVFAALASASAWA. C72 and C109 are joined by a disulfide.

The protein belongs to the protease inhibitor I11 (ecotin) family. Homodimer.

Its subcellular location is the periplasm. Functionally, general inhibitor of pancreatic serine proteases: inhibits chymotrypsin, trypsin, elastases, factor X, kallikrein as well as a variety of other proteases. This is Ecotin from Salmonella typhi.